A 265-amino-acid polypeptide reads, in one-letter code: MSRLTLLVLLVIAAVIQKVHGQGRENEKKNEHEPGNQDGGNQNEKTERNLREPNRQTRRFNTRNDNRNRNIMQKRAMLLWQRRMNQRSNQNNFGNNRSIPPTNTFNRNRSRTKSNKSEVEKENGSNKASKGKMQSGDGGGNGSEKEGPERRKVQHRIAKRFQKRHPSNSPKPKPARKTTNQQYRRHFMNNYNNKYWNWRRNMLNRRRTSPQHYQNQQARWRYYRYGPYTWYRYKNKWRLVRYNNMYRRNIKTNQSKKSNQNNQGD.

A signal peptide spans 1-21 (MSRLTLLVLLVIAAVIQKVHG). Disordered regions lie at residues 20–71 (HGQG…NRNI) and 88–183 (SNQN…NQQY). Composition is skewed to basic and acidic residues over residues 22 to 35 (QGRE…HEPG) and 44 to 55 (EKTERNLREPNR). Over residues 88–98 (SNQNNFGNNRS) the composition is skewed to low complexity. Positions 115–124 (NKSEVEKENG) are enriched in basic and acidic residues. The span at 152–166 (KVQHRIAKRFQKRHP) shows a compositional bias: basic residues.

As to expression, nacreous layer of shell (at protein level). Expressed primarily in the mantle with highest level in the mantle pallium and lower level in the mantle edge.

It localises to the secreted. The protein is Asparagine-rich protein of Pinctada maxima (Silver-lipped pearl oyster).